We begin with the raw amino-acid sequence, 361 residues long: Palmitoyltransferase ZDHHC16 (361 aa).

Residues 1–77 are Cytoplasmic-facing; the sequence is MRGQRSLLLG…VYWLVDNVIR (77 aa). Residues 78–98 traverse the membrane as a helical segment; that stretch reads WFGVVFVVLVIVLTGSIVAIA. The Lumenal portion of the chain corresponds to 99–116; that stretch reads YLCVLPLILRTYSVPRLC. Residues 117 to 137 traverse the membrane as a helical segment; the sequence is WHFFYSHWNLILIVFHYYQAI. The Cytoplasmic segment spans residues 138-198; sequence TTPPGYPPQG…NNCVGHYNHR (61 aa). One can recognise a DHHC domain in the interval 155–205; it reads SICKKCIYPKPARTHHCSICNRCVLKMDHHCPWLNNCVGHYNHRYFFSFCF. Catalysis depends on Cys-185, which acts as the S-palmitoyl cysteine intermediate. A helical membrane pass occupies residues 199–219; sequence YFFSFCFFMTLGCVYCSYGSW. Over 220–250 the chain is Lumenal; sequence DLFREAYAAIETYHQTPPPTFSFRERITHKS. Residues 251–271 form a helical membrane-spanning segment; the sequence is LVYLWFLCSSVALALGALTMW. At 272-361 the chain is on the cytoplasmic side; it reads HAVLISRGET…TAHSASVMAV (90 aa).

The protein belongs to the DHHC palmitoyltransferase family. In terms of assembly, interacts with ABL1. Interacts with COPS5. As to expression, ubiquitously expressed.

It localises to the endoplasmic reticulum membrane. It carries out the reaction L-cysteinyl-[protein] + hexadecanoyl-CoA = S-hexadecanoyl-L-cysteinyl-[protein] + CoA. Palmitoyl acyltransferase that mediates palmitoylation of proteins such as PLN and ZDHHC6. Required during embryonic heart development and cardiac function, possibly by mediating palmitoylation of PLN, thereby affecting PLN phosphorylation and homooligomerization. Also required for eye development. Palmitoylates ZDHHC6, affecting the quaternary assembly of ZDHHC6, its localization, stability and function. May play a role in DNA damage response. May be involved in apoptosis regulation. Involved in the proliferation of neural stem cells by regulating the FGF/ERK pathway. This is Palmitoyltransferase ZDHHC16 from Mus musculus (Mouse).